We begin with the raw amino-acid sequence, 585 residues long: Switch-associated protein 70 (585 aa).

The PH domain maps to 210-306 (DVLKQGYMMK…WIQAIYSTIH (97 aa)). Positions 316–529 (HKEARQRRKE…VKKKLEMATH (214 aa)) form a coiled coil. The interval 347–373 (ANENKQQELESVRKKLEEAASRAADEE) is disordered. Over residues 351 to 373 (KQQELESVRKKLEEAASRAADEE) the composition is skewed to basic and acidic residues.

As to quaternary structure, the SWAP complex consists of NPM1, NCL, PARP1 and SWAP70. Post-translationally, tyrosine-phosphorylated. Spleen. Expressed only in B-cells that have been induced to switch to various Ig isotypes.

Its subcellular location is the cytoplasm. The protein localises to the cell membrane. The protein resides in the nucleus. It is found in the cell projection. It localises to the lamellipodium. Its subcellular location is the cytoskeleton. In terms of biological role, phosphatidylinositol 3,4,5-trisphosphate-dependent guanine nucleotide exchange factor (GEF) which, independently of RAS, transduces signals from tyrosine kinase receptors to RAC. It also mediates signaling of membrane ruffling. Regulates the actin cytoskeleton as an effector or adapter protein in response to agonist stimulated phosphatidylinositol (3,4)-bisphosphate production and cell protrusion. The sequence is that of Switch-associated protein 70 (Swap70) from Mus musculus (Mouse).